A 640-amino-acid polypeptide reads, in one-letter code: Probable potassium transport system protein Kup (640 aa).

12 helical membrane-spanning segments follow: residues 26–46 (IAGL…TSPL), 69–89 (ILSL…VLFI), 117–137 (AWVL…DGMI), 155–175 (PAFR…LFVI), 186–206 (IFGP…IAGI), 224–244 (FFAD…LAIT), 265–285 (WFLV…ALIL), 297–317 (LLVP…ATII), 355–375 (IYVP…VVGF), 384–404 (AYGI…FVVV), 415–435 (AGLF…ATTV), and 437–457 (ILAG…LLTT).

The protein belongs to the HAK/KUP transporter (TC 2.A.72) family.

The protein resides in the cell inner membrane. The catalysed reaction is K(+)(in) + H(+)(in) = K(+)(out) + H(+)(out). Its function is as follows. Transport of potassium into the cell. Likely operates as a K(+):H(+) symporter. The sequence is that of Probable potassium transport system protein Kup from Aromatoleum aromaticum (strain DSM 19018 / LMG 30748 / EbN1) (Azoarcus sp. (strain EbN1)).